The primary structure comprises 285 residues: UPF0703 protein YcgQ (285 aa).

Helical transmembrane passes span 4–24 (LLVL…GNLT), 34–54 (LSFI…YLFI), 89–109 (LIYV…IATL), and 210–230 (FVLR…GMLV).

Belongs to the UPF0703 family.

The protein localises to the cell membrane. This is UPF0703 protein YcgQ (ycgQ) from Bacillus subtilis (strain 168).